Here is a 140-residue protein sequence, read N- to C-terminus: uncharacterized protein (140 aa).

This is an uncharacterized protein from Archaeoglobus fulgidus (strain ATCC 49558 / DSM 4304 / JCM 9628 / NBRC 100126 / VC-16).